The chain runs to 177 residues: MSRIGRAPVEVPGGVSVEISARSVKVRGPKGELTVPVGRGVSVREEDGKLLVERSSDAPQHRAMHGLTRSLLHNAVVGVTDGFAKTLQISGVGYRAQLQGQNVVLQVGYSHPVTVQPREGIQLEVPNPTTIVVRGIDKQQVGQMAAEIRRVRPPEPYKGKGIRYEGEQVRRKVGKAG.

It belongs to the universal ribosomal protein uL6 family. In terms of assembly, part of the 50S ribosomal subunit.

Functionally, this protein binds to the 23S rRNA, and is important in its secondary structure. It is located near the subunit interface in the base of the L7/L12 stalk, and near the tRNA binding site of the peptidyltransferase center. This chain is Large ribosomal subunit protein uL6, found in Rubrobacter xylanophilus (strain DSM 9941 / JCM 11954 / NBRC 16129 / PRD-1).